Here is a 598-residue protein sequence, read N- to C-terminus: Elongation factor 4 (598 aa).

The tr-type G domain occupies 5–187; it reads ANIRNFSIIA…ALVEFIPAPT (183 aa). GTP-binding positions include 17–22 and 134–137; these read DHGKST and NKID.

Belongs to the TRAFAC class translation factor GTPase superfamily. Classic translation factor GTPase family. LepA subfamily.

The protein resides in the cell inner membrane. The catalysed reaction is GTP + H2O = GDP + phosphate + H(+). Required for accurate and efficient protein synthesis under certain stress conditions. May act as a fidelity factor of the translation reaction, by catalyzing a one-codon backward translocation of tRNAs on improperly translocated ribosomes. Back-translocation proceeds from a post-translocation (POST) complex to a pre-translocation (PRE) complex, thus giving elongation factor G a second chance to translocate the tRNAs correctly. Binds to ribosomes in a GTP-dependent manner. In Psychrobacter arcticus (strain DSM 17307 / VKM B-2377 / 273-4), this protein is Elongation factor 4.